The sequence spans 125 residues: Large ribosomal subunit protein bL12 (125 aa).

It belongs to the bacterial ribosomal protein bL12 family. Homodimer. Part of the ribosomal stalk of the 50S ribosomal subunit. Forms a multimeric L10(L12)X complex, where L10 forms an elongated spine to which 2 to 4 L12 dimers bind in a sequential fashion. Binds GTP-bound translation factors.

Forms part of the ribosomal stalk which helps the ribosome interact with GTP-bound translation factors. Is thus essential for accurate translation. In Rickettsia conorii (strain ATCC VR-613 / Malish 7), this protein is Large ribosomal subunit protein bL12.